A 143-amino-acid polypeptide reads, in one-letter code: Probable prefoldin subunit 2 (143 aa).

Belongs to the prefoldin subunit beta family. Heterohexamer of two PFD-alpha type and four PFD-beta type subunits.

In terms of biological role, binds specifically to cytosolic chaperonin (c-CPN) and transfers target proteins to it. Binds to nascent polypeptide chain and promotes folding in an environment in which there are many competing pathways for nonnative proteins. This chain is Probable prefoldin subunit 2, found in Drosophila melanogaster (Fruit fly).